The sequence spans 249 residues: ATP synthase subunits region ORF 6 (249 aa).

In Fuscovulum blasticum (Rhodobacter blasticus), this protein is ATP synthase subunits region ORF 6.